Reading from the N-terminus, the 146-residue chain is Peptide methionine sulfoxide reductase MsrB (146 aa).

In terms of domain architecture, MsrB spans 2 to 125 (LKKNKDELND…NSAAVQFIPY (124 aa)). The active-site Nucleophile is the C114.

It belongs to the MsrB Met sulfoxide reductase family.

The catalysed reaction is L-methionyl-[protein] + [thioredoxin]-disulfide + H2O = L-methionyl-(R)-S-oxide-[protein] + [thioredoxin]-dithiol. This chain is Peptide methionine sulfoxide reductase MsrB, found in Staphylococcus carnosus (strain TM300).